Consider the following 548-residue polypeptide: Non-structural protein NS1 (548 aa).

This sequence belongs to the orbivirus non-structural protein NS1 family.

The chain is Non-structural protein NS1 (Segment-5) from Camelus dromedarius (Dromedary).